Reading from the N-terminus, the 619-residue chain is Mitogen-activated protein kinase kinase kinase 2 (619 aa).

Disordered regions lie at residues 25-44 (LSLQETRKAKPSSPKKQNDV), 126-168 (QATN…PPPG), 201-245 (LDPL…DNHQ), and 289-355 (RTQG…APTN). Phosphoserine is present on Ser-26. Residues 43–122 (DVRVKFEHRG…KSLKILLVVN (80 aa)) form the PB1 domain. The span at 126–143 (QATNLEPSPSPEDLNNTP) shows a compositional bias: polar residues. A phosphoserine mark is found at Ser-153 and Ser-164. Over residues 203–219 (PLSLSSPENSGSGSCPS) the composition is skewed to low complexity. Residues Ser-239, Ser-297, Ser-311, Ser-331, Ser-344, and Ser-349 each carry the phosphoserine modification. Residues 290–299 (TQGTSFRSPV) are compositionally biased toward polar residues. The segment covering 300 to 315 (SFSPTDHSLSTSSGSS) has biased composition (low complexity). Basic and acidic residues predominate over residues 322–332 (DDSRIRRRGSD). Over residues 336 to 346 (PTLTVTDISPP) the composition is skewed to polar residues. The region spanning 356 to 616 (WRLGKLLGQG…AEELLRHMFV (261 aa)) is the Protein kinase domain. ATP-binding positions include 362–370 (LGQGAFGRV) and Lys-385. The active-site Proton acceptor is Asp-483.

It belongs to the protein kinase superfamily. STE Ser/Thr protein kinase family. MAP kinase kinase kinase subfamily. As to quaternary structure, self-associates. Binds both upstream activators and downstream substrates in multimolecular complexes. Interacts (via the kinase catalytic domain) with STK38. Interacts with XIAP/BIRC4. Mg(2+) serves as cofactor. Post-translationally, ubiquitination by XIAP/BIRC4 does not lead to proteasomal degradation. In terms of processing, autophosphorylated.

It localises to the cytoplasm. Its subcellular location is the nucleus. The catalysed reaction is L-seryl-[protein] + ATP = O-phospho-L-seryl-[protein] + ADP + H(+). The enzyme catalyses L-threonyl-[protein] + ATP = O-phospho-L-threonyl-[protein] + ADP + H(+). Its activity is regulated as follows. Activated by phosphorylation on Thr-524. Interacts with PKN2; the interaction activates PKN2 kinase activity in a MAP3K2-independent kinase activity. Its function is as follows. Component of a protein kinase signal transduction cascade. Regulates the JNK and ERK5 pathways by phosphorylating and activating MAP2K5 and MAP2K7. Plays a role in caveolae kiss-and-run dynamics. The polypeptide is Mitogen-activated protein kinase kinase kinase 2 (Map3k2) (Mus musculus (Mouse)).